Consider the following 91-residue polypeptide: Lactococcin-B immunity protein (91 aa).

In terms of biological role, imparts immunity to lactococcin-B to naturally sensitive host strains. This is Lactococcin-B immunity protein (lciB) from Lactococcus lactis subsp. cremoris (Streptococcus cremoris).